A 362-amino-acid polypeptide reads, in one-letter code: Atypical chemokine receptor 3 (362 aa).

The Extracellular segment spans residues 1-47 (MDVHLFDYVEPGNYSDINWPCNSSDCIVVDTVQCPAMPNKNVLLYTL). N-linked (GlcNAc...) asparagine glycans are attached at residues asparagine 13 and asparagine 22. The chain crosses the membrane as a helical span at residues 48–68 (SFIYIFIFVIGMIANSVVVWV). Topologically, residues 69–81 (NIQAKTTGYDTHC) are cytoplasmic. Residues 82–102 (YILNLAIADLWVVITIPVWVV) form a helical membrane-spanning segment. Over 103-118 (SLVQHNQWPMGELTCK) the chain is Extracellular. A disulfide bond links cysteine 117 and cysteine 196. Residues 119–139 (ITHLIFSINLFGSIFFLACMS) form a helical membrane-spanning segment. Residues 140 to 162 (VDRYLSITYFTSTSSYKKKMVRR) lie on the Cytoplasmic side of the membrane. Residues 163–183 (VVCVLVWLLAFFVSLPDTYYL) traverse the membrane as a helical segment. Residues 184–213 (KTVTSASNNETYCRSFYPEHSIKEWLIGME) lie on the Extracellular side of the membrane. Residues 214 to 234 (LVSVILGFAVPFTIIAIFYFL) form a helical membrane-spanning segment. The Cytoplasmic portion of the chain corresponds to 235–252 (LARAMSASGDQEKHSSRK). Residues 253-273 (IIFSYVVVFLVCWLPYHFVVL) form a helical membrane-spanning segment. The Extracellular portion of the chain corresponds to 274–296 (LDIFSILHYIPFTCQLENVLFTA). The helical transmembrane segment at 297–319 (LHVTQCLSLVHCCVNPVLYSFIN) threads the bilayer. Topologically, residues 320–362 (RNYRYELMKAFIFKYSAKTGLTKLIDASRVSETEYSALEQNTK) are cytoplasmic. The tract at residues 324-362 (YELMKAFIFKYSAKTGLTKLIDASRVSETEYSALEQNTK) is C-terminal cytoplasmic tail. A phosphoserine mark is found at serine 347, serine 350, and serine 355.

It belongs to the G-protein coupled receptor 1 family. Atypical chemokine receptor subfamily. Homodimer. Can form heterodimers with CXCR4; heterodimerization may regulate CXCR4 signaling activity. Interacts with ARRB1 and ARRB2. In terms of processing, the Ser/Thr residues in the C-terminal cytoplasmic tail may be phosphorylated. Post-translationally, ubiquitinated at the Lys residues in its C-terminal cytoplasmic tail and is essential for correct trafficking from and to the cell membrane. Deubiquitinated by CXCL12-stimulation in a reversible manner. In terms of tissue distribution, expressed in vascular smooth muscle cells (at protein level). In brain, expressed in blood vessels, pyramidal cells in hippocampal subfield CA3, mature dentate gyrus granule cells, ventricle walls, olfactory bulb, accumbens shell, supraoptic, lateroanterior and ventromedial hypothalamic nuclei, medial region of thalamus, and motor nuclei, central gray and raphe magnus nucleus of brain stem. Detected in primary neurons, GABAergic neurons, astrocytes, cerebral cortex, ventral striatum and choroid plexus. Not detected in mesencephalon.

The protein localises to the cell membrane. It localises to the early endosome. The protein resides in the recycling endosome. In terms of biological role, atypical chemokine receptor that controls chemokine levels and localization via high-affinity chemokine binding that is uncoupled from classic ligand-driven signal transduction cascades, resulting instead in chemokine sequestration, degradation, or transcytosis. Also known as interceptor (internalizing receptor) or chemokine-scavenging receptor or chemokine decoy receptor. Acts as a receptor for chemokines CXCL11 and CXCL12/SDF1. Chemokine binding does not activate G-protein-mediated signal transduction but instead induces beta-arrestin recruitment, leading to ligand internalization and activation of MAPK signaling pathway. Required for regulation of CXCR4 protein levels in migrating interneurons, thereby adapting their chemokine responsiveness. In glioma cells, transduces signals via MEK/ERK pathway, mediating resistance to apoptosis. Promotes cell growth and survival. Not involved in cell migration, adhesion or proliferation of normal hematopoietic progenitors but activated by CXCL11 in malignant hemapoietic cells, leading to phosphorylation of ERK1/2 (MAPK3/MAPK1) and enhanced cell adhesion and migration. Plays a regulatory role in CXCR4-mediated activation of cell surface integrins by CXCL12. Required for heart valve development. Its function is as follows. Atypical chemokine receptor that controls chemokine levels and localization via high-affinity chemokine binding that is uncoupled from classic ligand-driven signal transduction cascades, resulting instead in chemokine sequestration, degradation, or transcytosis. Also known as interceptor (internalizing receptor) or chemokine-scavenging receptor or chemokine decoy receptor. Acts as a receptor for chemokines CXCL11 and CXCL12/SDF1. Chemokine binding does not activate G-protein-mediated signal transduction but instead induces beta-arrestin recruitment, leading to ligand internalization and activation of MAPK signaling pathway. Required for regulation of CXCR4 protein levels in migrating interneurons, thereby adapting their chemokine responsiveness. In glioma cells, transduces signals via MEK/ERK pathway, mediating resistance to apoptosis. Promotes cell growth and survival. Not involved in cell migration, adhesion or proliferation of normal hematopoietic progenitors but activated by CXCL11 in malignant hemapoietic cells, leading to phosphorylation of ERK1/2 (MAPK3/MAPK1) and enhanced cell adhesion and migration. Plays a regulatory role in CXCR4-mediated activation of cell surface integrins by CXCL12. Required for heart valve development. Regulates axon guidance in the oculomotor system through the regulation of CXCL12 levels. The sequence is that of Atypical chemokine receptor 3 from Rattus norvegicus (Rat).